The following is a 1415-amino-acid chain: DNA-directed RNA polymerase subunit beta' (1415 aa).

Zn(2+) is bound by residues C72, C74, C87, and C90. Residues D463, D465, and D467 each contribute to the Mg(2+) site. Positions 811, 885, 892, and 895 each coordinate Zn(2+).

The protein belongs to the RNA polymerase beta' chain family. The RNAP catalytic core consists of 2 alpha, 1 beta, 1 beta' and 1 omega subunit. When a sigma factor is associated with the core the holoenzyme is formed, which can initiate transcription. Mg(2+) serves as cofactor. The cofactor is Zn(2+).

It carries out the reaction RNA(n) + a ribonucleoside 5'-triphosphate = RNA(n+1) + diphosphate. DNA-dependent RNA polymerase catalyzes the transcription of DNA into RNA using the four ribonucleoside triphosphates as substrates. This chain is DNA-directed RNA polymerase subunit beta', found in Cereibacter sphaeroides (strain ATCC 17025 / ATH 2.4.3) (Rhodobacter sphaeroides).